A 318-amino-acid polypeptide reads, in one-letter code: MANEMEFEKPILELKSKIADLKEYNETSDVDLTNEIEKLEKRLAKLESSIYSNMTAWDKFQVARHPERPTTLDYISLLFEDFMELHGDRAFGDDAAIVGGIATFHGIPVTVIGHQRGKDTKDNLHRNFGMPHPEGFRKALRLMKQADKFGRPIICFIDTKGAYPGRAAEERGQSEAIARNLYEMSDMKVPIISIVIGEGGSGGALALGVGNQIFMLENAVFSVISPEGAAAILWKDASQAKKAAESMRITAGDLFELGITDGIIPEVKGGAHRDLNAQAEEINKTITKSLHALMAFSEEQLIEQRYEKFKKIGVYDTL.

In terms of domain architecture, CoA carboxyltransferase C-terminal spans 38 to 292 (KLEKRLAKLE…NKTITKSLHA (255 aa)).

It belongs to the AccA family. As to quaternary structure, acetyl-CoA carboxylase is a heterohexamer composed of biotin carboxyl carrier protein (AccB), biotin carboxylase (AccC) and two subunits each of ACCase subunit alpha (AccA) and ACCase subunit beta (AccD).

It localises to the cytoplasm. It carries out the reaction N(6)-carboxybiotinyl-L-lysyl-[protein] + acetyl-CoA = N(6)-biotinyl-L-lysyl-[protein] + malonyl-CoA. It participates in lipid metabolism; malonyl-CoA biosynthesis; malonyl-CoA from acetyl-CoA: step 1/1. Functionally, component of the acetyl coenzyme A carboxylase (ACC) complex. First, biotin carboxylase catalyzes the carboxylation of biotin on its carrier protein (BCCP) and then the CO(2) group is transferred by the carboxyltransferase to acetyl-CoA to form malonyl-CoA. This chain is Acetyl-coenzyme A carboxylase carboxyl transferase subunit alpha, found in Listeria monocytogenes serotype 4b (strain CLIP80459).